We begin with the raw amino-acid sequence, 382 residues long: Bifunctional enzyme IspD/IspF (382 aa).

The segment at 1-225 (MTFSVVIVAA…EHLAGVARVT (225 aa)) is 2-C-methyl-D-erythritol 4-phosphate cytidylyltransferase. The tract at residues 226 to 382 (RVGQGFDAHR…SAVVAVETPA (157 aa)) is 2-C-methyl-D-erythritol 2,4-cyclodiphosphate synthase. 2 residues coordinate a divalent metal cation: D232 and H234. 4-CDP-2-C-methyl-D-erythritol 2-phosphate-binding positions include 232 to 234 (DAH) and 258 to 259 (HS). H266 lines the a divalent metal cation pocket. 4-CDP-2-C-methyl-D-erythritol 2-phosphate contacts are provided by residues 280-282 (DIG), 356-359 (TTTE), F363, and R366.

This sequence in the N-terminal section; belongs to the IspD/TarI cytidylyltransferase family. IspD subfamily. The protein in the C-terminal section; belongs to the IspF family. A divalent metal cation is required as a cofactor.

It carries out the reaction 2-C-methyl-D-erythritol 4-phosphate + CTP + H(+) = 4-CDP-2-C-methyl-D-erythritol + diphosphate. The catalysed reaction is 4-CDP-2-C-methyl-D-erythritol 2-phosphate = 2-C-methyl-D-erythritol 2,4-cyclic diphosphate + CMP. Its pathway is isoprenoid biosynthesis; isopentenyl diphosphate biosynthesis via DXP pathway; isopentenyl diphosphate from 1-deoxy-D-xylulose 5-phosphate: step 2/6. It functions in the pathway isoprenoid biosynthesis; isopentenyl diphosphate biosynthesis via DXP pathway; isopentenyl diphosphate from 1-deoxy-D-xylulose 5-phosphate: step 4/6. Functionally, bifunctional enzyme that catalyzes the formation of 4-diphosphocytidyl-2-C-methyl-D-erythritol from CTP and 2-C-methyl-D-erythritol 4-phosphate (MEP) (IspD), and catalyzes the conversion of 4-diphosphocytidyl-2-C-methyl-D-erythritol 2-phosphate (CDP-ME2P) to 2-C-methyl-D-erythritol 2,4-cyclodiphosphate (ME-CPP) with a corresponding release of cytidine 5-monophosphate (CMP) (IspF). The chain is Bifunctional enzyme IspD/IspF from Caulobacter vibrioides (strain ATCC 19089 / CIP 103742 / CB 15) (Caulobacter crescentus).